The primary structure comprises 233 residues: Large ribosomal subunit protein uL1 (233 aa).

Belongs to the universal ribosomal protein uL1 family. In terms of assembly, part of the 50S ribosomal subunit.

Binds directly to 23S rRNA. The L1 stalk is quite mobile in the ribosome, and is involved in E site tRNA release. In terms of biological role, protein L1 is also a translational repressor protein, it controls the translation of the L11 operon by binding to its mRNA. This chain is Large ribosomal subunit protein uL1, found in Shewanella putrefaciens (strain CN-32 / ATCC BAA-453).